Consider the following 906-residue polypeptide: ATP-dependent DNA helicase PIF1 (906 aa).

2 disordered regions span residues 77–146 (DSEI…SSTF) and 229–297 (LEGS…PFKV). The span at 78–87 (SEIKESDDLS) shows a compositional bias: basic and acidic residues. A compositionally biased stretch (polar residues) spans 88-119 (KGQSHVYNGSPVTKNSILQIEKQQIQKSPRPT). A compositionally biased stretch (basic and acidic residues) spans 120 to 132 (ETNKRMQIRKDPD). The span at 234-261 (NKVQADNASPFRITSSFSSPSQIQNQGV) shows a compositional bias: polar residues. Residues 273 to 291 (QNVSSASQSSSPPMTVSQV) are compositionally biased toward low complexity. 390–397 (GSAGTGKS) contributes to the ATP binding site. A DNA-binding region spans residues 840–859 (QAYVALSRAVSRAGLQVLNF).

This sequence belongs to the helicase family. PIF1 subfamily. Monomer. Interacts with telomerase. The cofactor is Mg(2+).

It is found in the nucleus. The protein resides in the mitochondrion. It carries out the reaction Couples ATP hydrolysis with the unwinding of duplex DNA at the replication fork by translocating in the 5'-3' direction. This creates two antiparallel DNA single strands (ssDNA). The leading ssDNA polymer is the template for DNA polymerase III holoenzyme which synthesizes a continuous strand.. The enzyme catalyses ATP + H2O = ADP + phosphate + H(+). Its function is as follows. DNA-dependent ATPase and 5'-3' DNA helicase required for the maintenance of both mitochondrial and nuclear genome stability. Efficiently unwinds G-quadruplex (G4) DNA structures and forked RNA-DNA hybrids. Resolves G4 structures, preventing replication pausing and double-strand breaks (DSBs) at G4 motifs. Involved in the maintenance of telomeric DNA. Inhibits telomere elongation, de novo telomere formation and telomere addition to DSBs via catalytic inhibition of telomerase. Reduces the processivity of telomerase by displacing active telomerase from DNA ends. Releases telomerase by unwinding the short telomerase RNA/telomeric DNA hybrid that is the intermediate in the telomerase reaction. Involved in the maintenance of ribosomal (rDNA). Required for efficient fork arrest at the replication fork barrier within rDNA. Involved in the maintenance of mitochondrial (mtDNA). Required to maintain mtDNA under conditions that introduce dsDNA breaks in mtDNA, either preventing or repairing dsDNA breaks. May inhibit replication progression to allow time for repair. May have a general role in chromosomal replication by affecting Okazaki fragment maturation. May have a role in conjunction with DNA2 helicase/nuclease in 5'-flap extension during Okazaki fragment processing. The protein is ATP-dependent DNA helicase PIF1 of Candida albicans (strain SC5314 / ATCC MYA-2876) (Yeast).